Here is a 477-residue protein sequence, read N- to C-terminus: P3 protein (477 aa).

Residues 1 to 21 (MVLMQDKGSSQQWPGLGGEGG) form a disordered region. 8 helical membrane-spanning segments follow: residues 225–245 (PMLL…FLMA), 253–273 (ALAL…SYLF), 281–301 (VTLA…FLPL), 320–340 (ISKI…GVLI), 361–381 (VLLL…LAGI), 383–403 (LPIV…GYCL), 417–437 (VSIE…QLSL), and 450–470 (FIVA…HFIY).

This sequence belongs to the bile acid:sodium symporter (BASS) (TC 2.A.28) family.

The protein localises to the membrane. Its function is as follows. The ubiquitous expression and the conservation of the sequence in distant animal species suggest that the gene codes for a protein with housekeeping functions. The sequence is that of P3 protein (SLC10A3) from Homo sapiens (Human).